The following is a 248-amino-acid chain: Ubiquinone biosynthesis O-methyltransferase (248 aa).

4 residues coordinate S-adenosyl-L-methionine: arginine 41, glycine 72, aspartate 93, and methionine 136.

It belongs to the methyltransferase superfamily. UbiG/COQ3 family.

The enzyme catalyses a 3-demethylubiquinol + S-adenosyl-L-methionine = a ubiquinol + S-adenosyl-L-homocysteine + H(+). It catalyses the reaction a 3-(all-trans-polyprenyl)benzene-1,2-diol + S-adenosyl-L-methionine = a 2-methoxy-6-(all-trans-polyprenyl)phenol + S-adenosyl-L-homocysteine + H(+). Its pathway is cofactor biosynthesis; ubiquinone biosynthesis. O-methyltransferase that catalyzes the 2 O-methylation steps in the ubiquinone biosynthetic pathway. The sequence is that of Ubiquinone biosynthesis O-methyltransferase from Rhizobium johnstonii (strain DSM 114642 / LMG 32736 / 3841) (Rhizobium leguminosarum bv. viciae).